The primary structure comprises 237 residues: Phosphoribosylaminoimidazole-succinocarboxamide synthase (237 aa).

This sequence belongs to the SAICAR synthetase family.

The catalysed reaction is 5-amino-1-(5-phospho-D-ribosyl)imidazole-4-carboxylate + L-aspartate + ATP = (2S)-2-[5-amino-1-(5-phospho-beta-D-ribosyl)imidazole-4-carboxamido]succinate + ADP + phosphate + 2 H(+). Its pathway is purine metabolism; IMP biosynthesis via de novo pathway; 5-amino-1-(5-phospho-D-ribosyl)imidazole-4-carboxamide from 5-amino-1-(5-phospho-D-ribosyl)imidazole-4-carboxylate: step 1/2. This is Phosphoribosylaminoimidazole-succinocarboxamide synthase from Enterococcus faecalis (strain ATCC 700802 / V583).